We begin with the raw amino-acid sequence, 267 residues long: Zinc finger protein ZAT1 (267 aa).

The C2H2-type 1 zinc finger occupies 5 to 27 (HKCKLCWKSFANGRALGGHMRSH). Disordered stretches follow at residues 34–99 (PSQP…ADIK) and 181–204 (SHKK…KKKS). A compositionally biased stretch (basic and acidic residues) spans 52–62 (QDRESETESSK). Basic residues predominate over residues 63-73 (KPSRKRSRLNR). Positions 83-97 (QSNEEGKSETARAAD) are enriched in basic and acidic residues. 2 C2H2-type zinc fingers span residues 160-182 (FECE…RASH) and 209-231 (HECP…KRSH).

Its subcellular location is the nucleus. In terms of biological role, probable transcription factor that may be involved in stress responses. The protein is Zinc finger protein ZAT1 (ZAT1) of Arabidopsis thaliana (Mouse-ear cress).